Here is a 398-residue protein sequence, read N- to C-terminus: DNA-directed RNA polymerase III subunit RPC4 (398 aa).

The segment at 1-114 is disordered; that stretch reads MSEGNAAGEP…SHSIFEQGPA (114 aa). N-acetylserine is present on Ser2. Ser42 carries the phosphoserine modification. A compositionally biased stretch (basic and acidic residues) spans 66-100; sequence KIKEEPKEEVTVKKEKRERDRDRQREGHGRGRGRP. Glycyl lysine isopeptide (Lys-Gly) (interchain with G-Cter in SUMO2) cross-links involve residues Lys68 and Lys78. Omega-N-methylarginine is present on residues Arg95, Arg97, and Arg99. Residues Lys141, Lys152, Lys160, Lys190, Lys199, Lys206, Lys220, Lys285, Lys302, Lys310, and Lys396 each participate in a glycyl lysine isopeptide (Lys-Gly) (interchain with G-Cter in SUMO2) cross-link. The interval 220 to 244 is disordered; that stretch reads KEEPRDEEEEAKMKAPPKAARKTPG.

This sequence belongs to the eukaryotic RPC4/POLR3D RNA polymerase subunit family. As to quaternary structure, component of the RNA polymerase III complex consisting of 17 subunits: a ten-subunit horseshoe-shaped catalytic core composed of POLR3A/RPC1, POLR3B/RPC2, POLR1C/RPAC1, POLR1D/RPAC2, POLR3K/RPC10, POLR2E/RPABC1, POLR2F/RPABC2, POLR2H/RPABC3, POLR2K/RPABC4 and POLR2L/RPABC5; a mobile stalk composed of two subunits POLR3H/RPC8 and CRCP/RPC9, protruding from the core and functioning primarily in transcription initiation; and additional subunits homologous to general transcription factors of the RNA polymerase II machinery, POLR3C/RPC3-POLR3F/RPC6-POLR3G/RPC7 heterotrimer required for transcription initiation and POLR3D/RPC4-POLR3E/RPC5 heterodimer involved in both transcription initiation and termination. Post-translationally, sumoylation on Lys-141 can serve as a signal to mark misfolded Pol III for proteasomal degradation.

Its subcellular location is the nucleus. Functionally, DNA-dependent RNA polymerase catalyzes the transcription of DNA into RNA using the four ribonucleoside triphosphates as substrates. Specific peripheric component of RNA polymerase III (Pol III) which synthesizes small non-coding RNAs including 5S rRNA, snRNAs, tRNAs and miRNAs from at least 500 distinct genomic loci. Assembles with POLR3E/RPC5 forming a subcomplex that binds the Pol III core. Enables recruitment of Pol III at transcription initiation site and drives transcription initiation from both type 2 and type 3 DNA promoters. Required for efficient transcription termination and reinitiation. Pol III plays a key role in sensing and limiting infection by intracellular bacteria and DNA viruses. Acts as nuclear and cytosolic DNA sensor involved in innate immune response. Can sense non-self dsDNA that serves as template for transcription into dsRNA. The non-self RNA polymerase III transcripts, such as Epstein-Barr virus-encoded RNAs (EBERs) induce type I interferon and NF-kappa-B through the RIG-I pathway. The sequence is that of DNA-directed RNA polymerase III subunit RPC4 from Homo sapiens (Human).